A 156-amino-acid polypeptide reads, in one-letter code: Endoribonuclease YbeY (156 aa).

Positions 122, 126, and 132 each coordinate Zn(2+).

It belongs to the endoribonuclease YbeY family. Zn(2+) serves as cofactor.

Its subcellular location is the cytoplasm. Its function is as follows. Single strand-specific metallo-endoribonuclease involved in late-stage 70S ribosome quality control and in maturation of the 3' terminus of the 16S rRNA. The sequence is that of Endoribonuclease YbeY from Geobacillus thermodenitrificans (strain NG80-2).